The following is a 233-amino-acid chain: Defense protein 3 (233 aa).

The N-terminal stretch at 1–17 (MFGKFVLLAVLLVGVNS) is a signal peptide. Residues 18–45 (RYVIIEDPVYYIEDHELPEQWTSSRVRR) constitute a propeptide that is removed on maturation.

Belongs to the attacin/sarcotoxin-2 family.

Its subcellular location is the secreted. In terms of biological role, has antibacterial activity against both Gram-positive and Gram-negative bacteria. This chain is Defense protein 3, found in Lonomia obliqua (Moth).